Here is an 87-residue protein sequence, read N- to C-terminus: Phosphoribosyl-ATP pyrophosphatase (87 aa).

Belongs to the PRA-PH family.

The protein localises to the cytoplasm. It catalyses the reaction 1-(5-phospho-beta-D-ribosyl)-ATP + H2O = 1-(5-phospho-beta-D-ribosyl)-5'-AMP + diphosphate + H(+). The protein operates within amino-acid biosynthesis; L-histidine biosynthesis; L-histidine from 5-phospho-alpha-D-ribose 1-diphosphate: step 2/9. This Nocardioides sp. (strain ATCC BAA-499 / JS614) protein is Phosphoribosyl-ATP pyrophosphatase.